We begin with the raw amino-acid sequence, 152 residues long: Aminoglycoside N(6')-acetyltransferase type 1 (152 aa).

Positions 5–152 constitute an N-acetyltransferase domain; the sequence is PLVRPVETTD…AQVRCFRKPL (148 aa). Residues Trp-26, Tyr-73, Glu-86, and Asp-122 each coordinate substrate. Asn-127 provides a ligand contact to acetyl-CoA.

In terms of assembly, homodimer.

The enzyme catalyses kanamycin B + acetyl-CoA = N(6')-acetylkanamycin B + CoA + H(+). Functionally, catalyzes the transfer of an acetyl group from acetyl-CoA to the 6'-amino group of aminoglycoside molecules conferring resistance to antibiotics containing the purpurosamine ring including amikacin. This chain is Aminoglycoside N(6')-acetyltransferase type 1 (aacA7), found in Klebsiella aerogenes (Enterobacter aerogenes).